Consider the following 434-residue polypeptide: Adenylosuccinate synthetase (434 aa).

GTP contacts are provided by residues 11–17 and 39–41; these read GDEGKGK and GHT. D12 functions as the Proton acceptor in the catalytic mechanism. Mg(2+) contacts are provided by D12 and G39. Residues 12–15, 37–40, T134, R148, N230, T245, and R309 each bind IMP; these read DEGK and NAGH. The Proton donor role is filled by H40. 305–311 contributes to the substrate binding site; the sequence is VTTGRKR. Residues R311, 337-339, and 419-421 contribute to the GTP site; these read KLD and GTG.

Belongs to the adenylosuccinate synthetase family. Homodimer. Requires Mg(2+) as cofactor.

It localises to the cytoplasm. The catalysed reaction is IMP + L-aspartate + GTP = N(6)-(1,2-dicarboxyethyl)-AMP + GDP + phosphate + 2 H(+). It participates in purine metabolism; AMP biosynthesis via de novo pathway; AMP from IMP: step 1/2. Functionally, plays an important role in the de novo pathway and in the salvage pathway of purine nucleotide biosynthesis. Catalyzes the first committed step in the biosynthesis of AMP from IMP. The polypeptide is Adenylosuccinate synthetase (Lachancea thermotolerans (strain ATCC 56472 / CBS 6340 / NRRL Y-8284) (Yeast)).